We begin with the raw amino-acid sequence, 387 residues long: Succinate--CoA ligase [ADP-forming] subunit beta (387 aa).

ATP contacts are provided by residues lysine 46, 53 to 55, glutamate 99, alanine 102, and glutamate 107; that span reads GRG. Mg(2+) contacts are provided by asparagine 199 and aspartate 213. Residues asparagine 264 and 321–323 each bind substrate; that span reads GIV.

It belongs to the succinate/malate CoA ligase beta subunit family. Heterotetramer of two alpha and two beta subunits. Requires Mg(2+) as cofactor.

It catalyses the reaction succinate + ATP + CoA = succinyl-CoA + ADP + phosphate. The enzyme catalyses GTP + succinate + CoA = succinyl-CoA + GDP + phosphate. Its pathway is carbohydrate metabolism; tricarboxylic acid cycle; succinate from succinyl-CoA (ligase route): step 1/1. Functionally, succinyl-CoA synthetase functions in the citric acid cycle (TCA), coupling the hydrolysis of succinyl-CoA to the synthesis of either ATP or GTP and thus represents the only step of substrate-level phosphorylation in the TCA. The beta subunit provides nucleotide specificity of the enzyme and binds the substrate succinate, while the binding sites for coenzyme A and phosphate are found in the alpha subunit. The sequence is that of Succinate--CoA ligase [ADP-forming] subunit beta from Campylobacter jejuni subsp. doylei (strain ATCC BAA-1458 / RM4099 / 269.97).